The primary structure comprises 554 residues: Exodeoxyribonuclease 7 large subunit (554 aa).

The protein belongs to the XseA family. As to quaternary structure, heterooligomer composed of large and small subunits.

It is found in the cytoplasm. It catalyses the reaction Exonucleolytic cleavage in either 5'- to 3'- or 3'- to 5'-direction to yield nucleoside 5'-phosphates.. Bidirectionally degrades single-stranded DNA into large acid-insoluble oligonucleotides, which are then degraded further into small acid-soluble oligonucleotides. This Chlamydia pneumoniae (Chlamydophila pneumoniae) protein is Exodeoxyribonuclease 7 large subunit.